The sequence spans 408 residues: Argininosuccinate synthase (408 aa).

ATP is bound by residues 14–22 and Ala-41; that span reads AYSGGLDTS. Positions 92 and 97 each coordinate L-citrulline. Gly-122 lines the ATP pocket. 3 residues coordinate L-aspartate: Thr-124, Asn-128, and Asp-129. Asn-128 is a binding site for L-citrulline. Residues Arg-132, Ser-181, Ser-190, Glu-266, and Tyr-278 each coordinate L-citrulline.

The protein belongs to the argininosuccinate synthase family. Type 1 subfamily. In terms of assembly, homotetramer.

It localises to the cytoplasm. It catalyses the reaction L-citrulline + L-aspartate + ATP = 2-(N(omega)-L-arginino)succinate + AMP + diphosphate + H(+). The protein operates within amino-acid biosynthesis; L-arginine biosynthesis; L-arginine from L-ornithine and carbamoyl phosphate: step 2/3. The chain is Argininosuccinate synthase from Pelobacter propionicus (strain DSM 2379 / NBRC 103807 / OttBd1).